A 281-amino-acid chain; its full sequence is Elongation factor Ts (281 aa).

Residues 86–89 (TDFV) are involved in Mg(2+) ion dislocation from EF-Tu.

The protein belongs to the EF-Ts family.

It is found in the cytoplasm. Its function is as follows. Associates with the EF-Tu.GDP complex and induces the exchange of GDP to GTP. It remains bound to the aminoacyl-tRNA.EF-Tu.GTP complex up to the GTP hydrolysis stage on the ribosome. In Beutenbergia cavernae (strain ATCC BAA-8 / DSM 12333 / CCUG 43141 / JCM 11478 / NBRC 16432 / NCIMB 13614 / HKI 0122), this protein is Elongation factor Ts.